A 793-amino-acid chain; its full sequence is Protein translocase subunit SecA 2 (793 aa).

ATP contacts are provided by residues Q77, G95 to T99, and D493.

The protein belongs to the SecA family. In terms of assembly, monomer and homodimer. Part of the essential Sec protein translocation apparatus which comprises SecA, SecYEG and auxiliary proteins SecDF. Other proteins may also be involved.

It localises to the cell membrane. The protein localises to the cytoplasm. The enzyme catalyses ATP + H2O + cellular proteinSide 1 = ADP + phosphate + cellular proteinSide 2.. Part of the Sec protein translocase complex. Interacts with the SecYEG preprotein conducting channel. Has a central role in coupling the hydrolysis of ATP to the transfer of proteins into and across the cell membrane, serving as an ATP-driven molecular motor driving the stepwise translocation of polypeptide chains across the membrane. The chain is Protein translocase subunit SecA 2 from Streptococcus sanguinis (strain SK36).